The chain runs to 432 residues: Glutamate-1-semialdehyde 2,1-aminomutase (432 aa).

Lys265 is modified (N6-(pyridoxal phosphate)lysine).

This sequence belongs to the class-III pyridoxal-phosphate-dependent aminotransferase family. HemL subfamily. Homodimer. It depends on pyridoxal 5'-phosphate as a cofactor.

The protein localises to the cytoplasm. The catalysed reaction is (S)-4-amino-5-oxopentanoate = 5-aminolevulinate. It functions in the pathway porphyrin-containing compound metabolism; protoporphyrin-IX biosynthesis; 5-aminolevulinate from L-glutamyl-tRNA(Glu): step 2/2. This is Glutamate-1-semialdehyde 2,1-aminomutase from Histophilus somni (strain 2336) (Haemophilus somnus).